We begin with the raw amino-acid sequence, 86 residues long: Protein Tat (86 aa).

Residues 1–24 form an interaction with human CREBBP region; the sequence is MEPVDPRLEPWKHPGSQPKTACTN. Residues 1 to 48 are transactivation; sequence MEPVDPRLEPWKHPGSQPKTACTNCYCKKCCFHCQVCFITKALGISYG. Cysteine 22, cysteine 25, and cysteine 27 together coordinate Zn(2+). A cysteine-rich region spans residues 22–37; it reads CTNCYCKKCCFHCQVC. Lysine 28 carries the post-translational modification N6-acetyllysine; by host PCAF. The Zn(2+) site is built by cysteine 30, histidine 33, cysteine 34, and cysteine 37. The core stretch occupies residues 38–48; that stretch reads FITKALGISYG. The span at 48–58 shows a compositional bias: basic residues; it reads GRKKRRQRRRP. Residues 48–86 are disordered; it reads GRKKRRQRRRPPQGSQTHQVSLSKQPTSQSRGDPTGPKE. Positions 49–57 match the Nuclear localization signal, RNA-binding (TAR), and protein transduction motif; sequence RKKRRQRRR. The segment at 49-86 is interaction with the host capping enzyme RNGTT; the sequence is RKKRRQRRRPPQGSQTHQVSLSKQPTSQSRGDPTGPKE. N6-acetyllysine; by host EP300 and GCN5L2 occurs at positions 50 and 51. Asymmetric dimethylarginine; by host PRMT6 is present on residues arginine 52 and arginine 53. The segment covering 62-79 has biased composition (polar residues); it reads SQTHQVSLSKQPTSQSRG. Lysine 71 is covalently cross-linked (Glycyl lysine isopeptide (Lys-Gly) (interchain with G-Cter in ubiquitin)). The Cell attachment site motif lies at 78–80; that stretch reads RGD.

It belongs to the lentiviruses Tat family. As to quaternary structure, interacts with host CCNT1. Associates with the P-TEFb complex composed at least of Tat, P-TEFb (CDK9 and CCNT1), TAR RNA, RNA Pol II. Recruits the HATs CREBBP, TAF1/TFIID, EP300, PCAF and GCN5L2. Interacts with host KAT5/Tip60; this interaction targets the latter to degradation. Interacts with the host deacetylase SIRT1. Interacts with host capping enzyme RNGTT; this interaction stimulates RNGTT. Binds to host KDR, and to the host integrins ITGAV/ITGB3 and ITGA5/ITGB1. Interacts with host KPNB1/importin beta-1 without previous binding to KPNA1/importin alpha-1. Interacts with EIF2AK2. Interacts with host nucleosome assembly protein NAP1L1; this interaction may be required for the transport of Tat within the nucleus, since the two proteins interact at the nuclear rim. Interacts with host C1QBP/SF2P32; this interaction involves lysine-acetylated Tat. Interacts with the host chemokine receptors CCR2, CCR3 and CXCR4. Interacts with host DPP4/CD26; this interaction may trigger an anti-proliferative effect. Interacts with host LDLR. Interacts with the host extracellular matrix metalloproteinase MMP1. Interacts with host PRMT6; this interaction mediates Tat's methylation. Interacts with, and is ubiquitinated by MDM2/Hdm2. Interacts with host PSMC3 and HTATIP2. Interacts with STAB1; this interaction may overcome SATB1-mediated repression of IL2 and IL2RA (interleukin) in T cells by binding to the same domain than HDAC1. Interacts (when acetylated) with human CDK13, thereby increasing HIV-1 mRNA splicing and promoting the production of the doubly spliced HIV-1 protein Nef. Interacts with host TBP; this interaction modulates the activity of transcriptional pre-initiation complex. Interacts with host RELA. Interacts with host PLSCR1; this interaction negatively regulates Tat transactivation activity by altering its subcellular distribution. Asymmetrical arginine methylation by host PRMT6 seems to diminish the transactivation capacity of Tat and affects the interaction with host CCNT1. In terms of processing, acetylation by EP300, CREBBP, GCN5L2/GCN5 and PCAF regulates the transactivation activity of Tat. EP300-mediated acetylation of Lys-50 promotes dissociation of Tat from the TAR RNA through the competitive binding to PCAF's bromodomain. In addition, the non-acetylated Tat's N-terminus can also interact with PCAF. PCAF-mediated acetylation of Lys-28 enhances Tat's binding to CCNT1. Lys-50 is deacetylated by SIRT1. Post-translationally, polyubiquitination by host MDM2 does not target Tat to degradation, but activates its transactivation function and fosters interaction with CCNT1 and TAR RNA. Phosphorylated by EIF2AK2 on serine and threonine residues adjacent to the basic region important for TAR RNA binding and function. Phosphorylation of Tat by EIF2AK2 is dependent on the prior activation of EIF2AK2 by dsRNA.

It localises to the host nucleus. The protein resides in the host nucleolus. Its subcellular location is the host cytoplasm. The protein localises to the secreted. In terms of biological role, transcriptional activator that increases RNA Pol II processivity, thereby increasing the level of full-length viral transcripts. Recognizes a hairpin structure at the 5'-LTR of the nascent viral mRNAs referred to as the transactivation responsive RNA element (TAR) and recruits the cyclin T1-CDK9 complex (P-TEFb complex) that will in turn hyperphosphorylate the RNA polymerase II to allow efficient elongation. The CDK9 component of P-TEFb and other Tat-activated kinases hyperphosphorylate the C-terminus of RNA Pol II that becomes stabilized and much more processive. Other factors such as HTATSF1/Tat-SF1, SUPT5H/SPT5, and HTATIP2 are also important for Tat's function. Besides its effect on RNA Pol II processivity, Tat induces chromatin remodeling of proviral genes by recruiting the histone acetyltransferases (HATs) CREBBP, EP300 and PCAF to the chromatin. This also contributes to the increase in proviral transcription rate, especially when the provirus integrates in transcriptionally silent region of the host genome. To ensure maximal activation of the LTR, Tat mediates nuclear translocation of NF-kappa-B by interacting with host RELA. Through its interaction with host TBP, Tat may also modulate transcription initiation. Tat can reactivate a latently infected cell by penetrating in it and transactivating its LTR promoter. In the cytoplasm, Tat is thought to act as a translational activator of HIV-1 mRNAs. Functionally, extracellular circulating Tat can be endocytosed by surrounding uninfected cells via the binding to several surface receptors such as CD26, CXCR4, heparan sulfate proteoglycans (HSPG) or LDLR. Neurons are rarely infected, but they internalize Tat via their LDLR. Through its interaction with nuclear HATs, Tat is potentially able to control the acetylation-dependent cellular gene expression. Modulates the expression of many cellular genes involved in cell survival, proliferation or in coding for cytokines or cytokine receptors. Tat plays a role in T-cell and neurons apoptosis. Tat induced neurotoxicity and apoptosis probably contribute to neuroAIDS. Circulating Tat also acts as a chemokine-like and/or growth factor-like molecule that binds to specific receptors on the surface of the cells, affecting many cellular pathways. In the vascular system, Tat binds to ITGAV/ITGB3 and ITGA5/ITGB1 integrins dimers at the surface of endothelial cells and competes with bFGF for heparin-binding sites, leading to an excess of soluble bFGF. The chain is Protein Tat from Homo sapiens (Human).